The chain runs to 479 residues: Glycogen synthase (479 aa).

Lys15 is an ADP-alpha-D-glucose binding site.

It belongs to the glycosyltransferase 1 family. Bacterial/plant glycogen synthase subfamily.

It catalyses the reaction [(1-&gt;4)-alpha-D-glucosyl](n) + ADP-alpha-D-glucose = [(1-&gt;4)-alpha-D-glucosyl](n+1) + ADP + H(+). It participates in glycan biosynthesis; glycogen biosynthesis. Functionally, synthesizes alpha-1,4-glucan chains using ADP-glucose. This chain is Glycogen synthase, found in Pectobacterium atrosepticum (strain SCRI 1043 / ATCC BAA-672) (Erwinia carotovora subsp. atroseptica).